A 686-amino-acid chain; its full sequence is MDQSSRRDESYHETHPGSLDPSHQSHPHPHPHPTLHRPNQGGVYYDSPQHGMFQQPYQQHGGFHQQNELQHLREFSDSHDNAFSHHSYQQDRAGVSTLPNNISHAYGGSHPLAESQHSGGPQSGPRIDPNHHPHQDDPHRPSEPLSHPSSTGSHQGTTHQQYHERSHHLNPQQNRDHADTISYRSSTRFYRSHAPFSRQERPHLHADHHHEGHHAHSHHGEHPHHKEQRHYHGDHMHHHIHHRSPSASQLSHKSHSTLATSPSHVGSKSTASGARYTFGARSQIFGKAQSRESLRESASLSEGEDHVQKRKKAQRAHKKAHTGNIFQLLWEKISHLLLGLQQMILSLTQSLGFETFIFIVVCLNTVILVAQTFTELEIRGEWYFMVLDSIFLSIYVLEAVLKLIALGLEYFYDPWNNLDFFIMVMAVLDFVLLQINSLSYSFYNHSLFRILKVFKSMRALRAIRVLRRLSILTSLHEVAGTLSGSLPSITAILTLMFTCLFLFSVVLRALFQDSDPKRFQNIFTTLFTLFTMLTLDDWSLIYIDNRAQGAWYIIPILMIYIVIQYFIFLNLVIAVLVDNFQMALLKGLEKVKLEQAARVHEKLLDDSLTDLNKADANAQMTEEALKMQLIEGMFGNMTVKQRVLHFQFLQLVAAVEQHQQKFRSQAYVIDELVDMAFEAGDDDYGK.

A compositionally biased stretch (basic and acidic residues) spans 1–15 (MDQSSRRDESYHETH). Disordered regions lie at residues 1–57 (MDQS…QQPY), 97–177 (TLPN…NRDH), 207–271 (DHHH…KSTA), and 289–318 (QSRE…RAHK). Residues 1–351 (MDQSSRRDES…QMILSLTQSL (351 aa)) are Cytoplasmic-facing. Residues 25-35 (SHPHPHPHPTL) show a composition bias toward basic residues. Residues 128 to 142 (DPNHHPHQDDPHRPS) show a composition bias toward basic and acidic residues. The span at 147-160 (HPSSTGSHQGTTHQ) shows a compositional bias: polar residues. Composition is skewed to basic residues over residues 211-229 (EGHH…KEQR) and 235-244 (HMHHHIHHRS). Positions 245-271 (PSASQLSHKSHSTLATSPSHVGSKSTA) are enriched in polar residues. Residues 308-318 (QKRKKAQRAHK) show a composition bias toward basic residues. The chain crosses the membrane as a helical span at residues 352–373 (GFETFIFIVVCLNTVILVAQTF). Residues 374-382 (TELEIRGEW) lie on the Extracellular side of the membrane. The helical transmembrane segment at 383–404 (YFMVLDSIFLSIYVLEAVLKLI) threads the bilayer. The Cytoplasmic segment spans residues 405–412 (ALGLEYFY). Residues 413–435 (DPWNNLDFFIMVMAVLDFVLLQI) form a helical membrane-spanning segment. Over 436 to 446 (NSLSYSFYNHS) the chain is Extracellular. A helical membrane pass occupies residues 447–469 (LFRILKVFKSMRALRAIRVLRRL). At 470 to 487 (SILTSLHEVAGTLSGSLP) the chain is on the cytoplasmic side. Residues 488–510 (SITAILTLMFTCLFLFSVVLRAL) form a helical membrane-spanning segment. At 511-521 (FQDSDPKRFQN) the chain is on the extracellular side. An intramembrane region (helical; Pore-forming) is located at residues 522–534 (IFTTLFTLFTMLT). Residues 535–551 (LDDWSLIYIDNRAQGAW) are Extracellular-facing. Residues 552–577 (YIIPILMIYIVIQYFIFLNLVIAVLV) traverse the membrane as a helical segment. Residues 578 to 686 (DNFQMALLKG…FEAGDDDYGK (109 aa)) lie on the Cytoplasmic side of the membrane.

It belongs to the cation channel sperm-associated (TC 1.A.1.19) family. As to quaternary structure, component of the CatSper complex or CatSpermasome composed of the core pore-forming members CATSPER1, CATSPER2, CATSPER3 and CATSPER4 as well as auxiliary members CATSPERB, CATSPERG2, CATSPERD, CATSPERE, CATSPERZ, C2CD6/CATSPERT, SLCO6C1, TMEM249, TMEM262 and EFCAB9. HSPA1 may be an additional auxiliary complex member. The core complex members CATSPER1, CATSPER2, CATSPER3 and CATSPER4 form a heterotetrameric channel. The auxiliary CATSPERB, CATSPERG2, CATSPERD and CATSPERE subunits form a pavilion-like structure over the pore which stabilizes the complex through interactions with CATSPER4, CATSPER3, CATSPER1 and CATSPER2 respectively. SLCO6C1 interacts with CATSPERE, and TMEM262/CATSPERH interacts with CATSPERB, further stabilizing the complex. C2CD6/CATSPERT interacts at least with CATSPERD and is required for targeting the CatSper complex in the flagellar membrane. Interacts with Ca(v)3.3/CACNA1I, leading to suppression of T-type calcium channel activity. In terms of tissue distribution, testis-specific.

The protein resides in the cell projection. The protein localises to the cilium. It localises to the flagellum membrane. The enzyme catalyses Ca(2+)(in) = Ca(2+)(out). Activated by intracellular alkalinization. In contrast to the human ortholog, not activated by progesterone. Its function is as follows. Pore-forming subunit of the CatSper complex, a sperm-specific voltage-gated calcium channel that plays a central role in sperm cell hyperactivation. Controls calcium entry to mediate the hyperactivated motility, a step needed for sperm motility which is essential late in the preparation of sperm for fertilization. This is Cation channel sperm-associated protein 1 (Catsper1) from Mus musculus (Mouse).